The sequence spans 90 residues: MNGQGASADPQLQQFIEIESQKQRFQQLVHHMTEVCWDKCMDKPGPKLDSRAEMCFVNCVERFIDTSQFILNRLEQTQRSKGSFSETMTD.

The Twin CX3C motif signature appears at 36–59 (CWDKCMDKPGPKLDSRAEMCFVNC). Cystine bridges form between Cys36–Cys59 and Cys40–Cys55.

Belongs to the small Tim family. Heterohexamer; composed of 3 copies of TIMM8A and 3 copies of TIMM13, named soluble 70 kDa complex. Associates with the TIM22 complex, whose core is composed of TIMM22.

It localises to the mitochondrion inner membrane. Its function is as follows. Mitochondrial intermembrane chaperone that participates in the import and insertion of some multi-pass transmembrane proteins into the mitochondrial inner membrane. Also required for the transfer of beta-barrel precursors from the TOM complex to the sorting and assembly machinery (SAM complex) of the outer membrane. Acts as a chaperone-like protein that protects the hydrophobic precursors from aggregation and guide them through the mitochondrial intermembrane space. The TIMM8-TIMM13 complex mediates the import of some proteins while the predominant TIMM9-TIMM10 70 kDa complex mediates the import of much more proteins. The sequence is that of Mitochondrial import inner membrane translocase subunit Tim8 A (timm8a) from Takifugu rubripes (Japanese pufferfish).